The chain runs to 72 residues: UPF0154 protein RBAM_017710 (72 aa).

Residues 4–24 (WVGILVGVVALLIGVALGFFI) traverse the membrane as a helical segment.

Belongs to the UPF0154 family.

The protein resides in the cell membrane. This Bacillus velezensis (strain DSM 23117 / BGSC 10A6 / LMG 26770 / FZB42) (Bacillus amyloliquefaciens subsp. plantarum) protein is UPF0154 protein RBAM_017710.